The chain runs to 704 residues: Protein arginine N-methyltransferase 7 (704 aa).

SAM-dependent MTase PRMT-type domains lie at Glu14 to Trp356 and Ser366 to Glu704.

It belongs to the class I-like SAM-binding methyltransferase superfamily. Protein arginine N-methyltransferase family. PRMT7 subfamily.

Functionally, essential arginine methyltransferase that can both catalyze the formation of omega-N monomethylarginine (MMA) and symmetrical dimethylarginine (sDMA). Specifically mediates the symmetrical dimethylation of arginine residues in the small nuclear ribonucleoproteins SmD1 and SmD3. The chain is Protein arginine N-methyltransferase 7 (Art7) from Drosophila grimshawi (Hawaiian fruit fly).